The sequence spans 361 residues: 3-dehydroquinate synthase (361 aa).

NAD(+) contacts are provided by residues 72-77 (SGEKEK), 130-131 (TT), Lys142, and Lys151. Zn(2+)-binding residues include Glu184, His247, and His264.

It belongs to the sugar phosphate cyclases superfamily. Dehydroquinate synthase family. Co(2+) is required as a cofactor. The cofactor is Zn(2+). NAD(+) serves as cofactor.

Its subcellular location is the cytoplasm. It carries out the reaction 7-phospho-2-dehydro-3-deoxy-D-arabino-heptonate = 3-dehydroquinate + phosphate. It participates in metabolic intermediate biosynthesis; chorismate biosynthesis; chorismate from D-erythrose 4-phosphate and phosphoenolpyruvate: step 2/7. In terms of biological role, catalyzes the conversion of 3-deoxy-D-arabino-heptulosonate 7-phosphate (DAHP) to dehydroquinate (DHQ). The protein is 3-dehydroquinate synthase of Bacillus cereus (strain ZK / E33L).